The following is a 492-amino-acid chain: Forkhead box protein O6 (492 aa).

Disordered stretches follow at residues 1–76 (MAAK…EVGP), 163–235 (SWWM…ASPA), 315–338 (GAGL…APRP), and 466–492 (FNFD…WVPG). The segment at residues 88–182 (WGNLSYADLI…KTGKTPRRRA (95 aa)) is a DNA-binding region (fork-head). Serine 184 carries the post-translational modification Phosphoserine. Residues 192–203 (LRIKGKASKKKQ) are compositionally biased toward basic residues. The span at 225–235 (PAAAKWAASPA) shows a compositional bias: low complexity. A compositionally biased stretch (pro residues) spans 472 to 486 (LPPPPPGLAGAPPPN).

Phosphorylation of Ser-184 is be important in regulating the transacriptional activity.

The protein resides in the cytoplasm. It is found in the nucleus. In terms of biological role, transcriptional activator. The sequence is that of Forkhead box protein O6 (FOXO6) from Homo sapiens (Human).